The primary structure comprises 639 residues: Complex I assembly factor Egm, mitochondrial (639 aa).

The transit peptide at 1–26 (MRPNLFSGASRLLTYSRNGKLLTRGR) directs the protein to the mitochondrion. A disordered region spans residues 23–65 (TRGRSTKATSSSLDSQHQDAATTEGGRAESVEESPEQQRKLPT). The span at 28-43 (TKATSSSLDSQHQDAA) shows a compositional bias: polar residues. Basic and acidic residues predominate over residues 48–65 (GRAESVEESPEQQRKLPT).

The protein belongs to the acyl-CoA dehydrogenase family. Associates with mitochondrial complex I assembly intermediates during its biogenesis. The cofactor is FAD.

The protein localises to the mitochondrion. Functionally, as part of the MCIA complex, primarily participates in the assembly of the mitochondrial complex I and therefore plays a role in oxidative phosphorylation. This chain is Complex I assembly factor Egm, mitochondrial, found in Drosophila melanogaster (Fruit fly).